A 439-amino-acid chain; its full sequence is Dolichyl-diphosphooligosaccharide--protein glycosyltransferase 48 kDa subunit (439 aa).

Positions 1 to 25 (MELGAAARAWSLLWLLLPLLGLVGA) are cleaved as a signal peptide. The Lumenal portion of the chain corresponds to 27–410 (GPRTLVLLDN…YERFIPSAYP (384 aa)). The chain crosses the membrane as a helical span at residues 411–430 (YYASAFSMMVGLFIFSVVFL). Residues 431 to 439 (HMKEKEKSD) are Cytoplasmic-facing.

It belongs to the DDOST 48 kDa subunit family. Component of the oligosaccharyltransferase (OST) complex. OST exists in two different complex forms which contain common core subunits RPN1, RPN2, OST48, OST4, DAD1 and TMEM258, either STT3A or STT3B as catalytic subunits, and form-specific accessory subunits. STT3A complex assembly occurs through the formation of 3 subcomplexes. Subcomplex 1 contains RPN1 and TMEM258, subcomplex 2 contains the STT3A-specific subunits STT3A, DC2/OSTC, and KCP2 as well as the core subunit OST4, and subcomplex 3 contains RPN2, DAD1, and OST48. The STT3A complex can form stable complexes with the Sec61 complex or with both the Sec61 and TRAP complexes. Interacts with SMIM22.

The protein resides in the endoplasmic reticulum membrane. It functions in the pathway protein modification; protein glycosylation. In terms of biological role, subunit of the oligosaccharyl transferase (OST) complex that catalyzes the initial transfer of a defined glycan (Glc(3)Man(9)GlcNAc(2) in eukaryotes) from the lipid carrier dolichol-pyrophosphate to an asparagine residue within an Asn-X-Ser/Thr consensus motif in nascent polypeptide chains, the first step in protein N-glycosylation. N-glycosylation occurs cotranslationally and the complex associates with the Sec61 complex at the channel-forming translocon complex that mediates protein translocation across the endoplasmic reticulum (ER). All subunits are required for a maximal enzyme activity. Required for the assembly of both SST3A- and SS3B-containing OST complexes. The sequence is that of Dolichyl-diphosphooligosaccharide--protein glycosyltransferase 48 kDa subunit from Sus scrofa (Pig).